A 155-amino-acid polypeptide reads, in one-letter code: Endoribonuclease YbeY (155 aa).

His-114, His-118, and His-124 together coordinate Zn(2+).

Belongs to the endoribonuclease YbeY family. Zn(2+) is required as a cofactor.

It localises to the cytoplasm. Functionally, single strand-specific metallo-endoribonuclease involved in late-stage 70S ribosome quality control and in maturation of the 3' terminus of the 16S rRNA. The sequence is that of Endoribonuclease YbeY from Proteus mirabilis (strain HI4320).